Consider the following 183-residue polypeptide: Adenine phosphoribosyltransferase (183 aa).

This sequence belongs to the purine/pyrimidine phosphoribosyltransferase family. As to quaternary structure, homodimer.

The protein localises to the cytoplasm. The catalysed reaction is AMP + diphosphate = 5-phospho-alpha-D-ribose 1-diphosphate + adenine. Its pathway is purine metabolism; AMP biosynthesis via salvage pathway; AMP from adenine: step 1/1. Catalyzes a salvage reaction resulting in the formation of AMP, that is energically less costly than de novo synthesis. This chain is Adenine phosphoribosyltransferase, found in Klebsiella pneumoniae subsp. pneumoniae (strain ATCC 700721 / MGH 78578).